The primary structure comprises 257 residues: MKEVFSVGGKELTSRLLIGSGKYSTNKLIPAILDASGSQVITMAMRRVDTEFTEENILNYIPSDCVLMPNTSGARNAQEAIRIARLARAAGCGDWVKIEVISDNRYLLPDNYETIRATEVLTAEGFQVFPYMSPDLMVAKELERVGAAAVMPLGAPIGSNRGLQTRELVRILIEEISLPVIVDAGIGRPSEAAEAMEMGAAAVLVNTAVATAKDPVAMARAFGLAVEAGRTAYLAGPGATQQVARASSPLTGFLREE.

K97 serves as the catalytic Schiff-base intermediate with DXP. 1-deoxy-D-xylulose 5-phosphate is bound by residues G158, 184–185, and 206–207; these read AG and NT.

This sequence belongs to the ThiG family. In terms of assembly, homotetramer. Forms heterodimers with either ThiH or ThiS.

The protein resides in the cytoplasm. The catalysed reaction is [ThiS sulfur-carrier protein]-C-terminal-Gly-aminoethanethioate + 2-iminoacetate + 1-deoxy-D-xylulose 5-phosphate = [ThiS sulfur-carrier protein]-C-terminal Gly-Gly + 2-[(2R,5Z)-2-carboxy-4-methylthiazol-5(2H)-ylidene]ethyl phosphate + 2 H2O + H(+). The protein operates within cofactor biosynthesis; thiamine diphosphate biosynthesis. Catalyzes the rearrangement of 1-deoxy-D-xylulose 5-phosphate (DXP) to produce the thiazole phosphate moiety of thiamine. Sulfur is provided by the thiocarboxylate moiety of the carrier protein ThiS. In vitro, sulfur can be provided by H(2)S. The protein is Thiazole synthase of Desulforamulus reducens (strain ATCC BAA-1160 / DSM 100696 / MI-1) (Desulfotomaculum reducens).